The following is a 244-amino-acid chain: HTH-type transcriptional repressor PhnF (244 aa).

The HTH gntR-type domain maps to Arg8–Pro74. Positions Glu35 to Arg54 form a DNA-binding region, H-T-H motif.

Its subcellular location is the cytoplasm. Functionally, represses the phnDCE operon, involved in the uptake of phosphate, under conditions of phosphate availability in the cell. This is HTH-type transcriptional repressor PhnF (phnF) from Mycolicibacterium smegmatis (strain ATCC 700084 / mc(2)155) (Mycobacterium smegmatis).